We begin with the raw amino-acid sequence, 617 residues long: Formin-binding protein 1 (617 aa).

Residues 1-79 (MSWGTELWDQ…CKAFISNLNE (79 aa)) form a required for self-association and induction of membrane tubulation region. One can recognise an F-BAR domain in the interval 1–264 (MSWGTELWDQ…AAESIDQKND (264 aa)). The interval 1 to 335 (MSWGTELWDQ…KKNKLMSLLT (335 aa)) is interaction with microtubules. N6-acetyllysine is present on residues lysine 66 and lysine 110. Residues 67–259 (YTSCKAFISN…DGIVKAAESI (193 aa)) adopt a coiled-coil conformation. The segment at 251 to 617 (GIVKAAESID…VCLDKNAKDS (367 aa)) is required for self-association and induction of membrane tubulation. 2 disordered regions span residues 280 to 315 (GDIEFEDYTQPMKRTVSDNSLSNSRGEGKPDLKFGG) and 333 to 366 (LLTSPHQPPPPPPASASPSAVPNGPQSPKQQKEP). Phosphoserine is present on residues serine 296 and serine 299. Positions 338–347 (HQPPPPPPAS) are enriched in pro residues. 2 positions are modified to phosphoserine: serine 349 and serine 359. Positions 398–490 (TPEDFSNLPP…EVEGRLPARS (93 aa)) form a coiled coil. The segment at 400–552 (EDFSNLPPEQ…FDDEEPLPAI (153 aa)) is interaction with RND2. An REM-1 domain is found at 404 to 481 (NLPPEQRRKK…TQKFEAWLAE (78 aa)). Positions 486 to 531 (LPARSEQARRQSGLYDSQNPPTVNNCAQDRESPDGSYTEEQSQESE) are disordered. Positions 495-617 (RQSGLYDSQN…VCLDKNAKDS (123 aa)) are interaction with PDE6G. Serine 497 bears the Phosphoserine mark. Residues 499-512 (LYDSQNPPTVNNCA) show a composition bias toward polar residues. A Phosphotyrosine modification is found at tyrosine 500. The interval 514-617 (DRESPDGSYT…VCLDKNAKDS (104 aa)) is required for interaction with TNKS. Serine 521 is subject to Phosphoserine. The segment at 535 to 617 (LATDFDDEFD…VCLDKNAKDS (83 aa)) is interaction with DNM1 and DNM3. The 62-residue stretch at 550–611 (PAIGTCKALY…PTSYVEVCLD (62 aa)) folds into the SH3 domain. The segment at 550-617 (PAIGTCKALY…VCLDKNAKDS (68 aa)) is interaction with ARHGAP17, DAAM1, DIAPH1 and DIAPH2. The interval 553-609 (GTCKALYTFEGQNEGTISVVEGETLYVIEEDKGDGWTRIRRNEDEEGYVPTSYVEVC) is interaction with DNM2 and WASL. The segment at 553–610 (GTCKALYTFEGQNEGTISVVEGETLYVIEEDKGDGWTRIRRNEDEEGYVPTSYVEVCL) is interaction with FASLG.

This sequence belongs to the FNBP1 family. As to quaternary structure, interacts specifically with GTP-bound RND2 and CDC42. Interacts with PDE6G and microtubules. Homodimerizes, the dimers can polymerize end-to-end to form filamentous structures. Interacts with AKAP9, ARHGAP17, DAAM1, DIAPH1, DIAPH2, DNM1, DNM2, DNM3, FASLG/FASL, SNX2 and WASL/N-WASP. May interact with TNKS. Very highly expressed in the epithelial cells of the gastrointestinal tract, respiratory, reproductive and urinary systems. Also highly expressed in brown adipose tissue, cardiomyocytes, enteric ganglia and glucagon producing cells of the pancreas. Expressed in germ cells of the testis and all regions of the brain.

It is found in the cytoplasm. The protein localises to the cytoskeleton. It localises to the cell cortex. The protein resides in the lysosome. Its subcellular location is the cytoplasmic vesicle. It is found in the cell membrane. The protein localises to the membrane. It localises to the clathrin-coated pit. Its function is as follows. May act as a link between RND2 signaling and regulation of the actin cytoskeleton. Required to coordinate membrane tubulation with reorganization of the actin cytoskeleton during the late stage of clathrin-mediated endocytosis. Binds to lipids such as phosphatidylinositol 4,5-bisphosphate and phosphatidylserine and promotes membrane invagination and the formation of tubules. Also enhances actin polymerization via the recruitment of WASL/N-WASP, which in turn activates the Arp2/3 complex. Actin polymerization may promote the fission of membrane tubules to form endocytic vesicles. May be required for the lysosomal retention of FASLG/FASL. The protein is Formin-binding protein 1 (FNBP1) of Homo sapiens (Human).